The primary structure comprises 168 residues: Scytalone dehydratase arp1 (168 aa).

Substrate contacts are provided by Y29 and Y49. Active-site residues include H84 and H109. A substrate-binding site is contributed by N130.

This sequence belongs to the scytalone dehydratase family. Homotrimer. Each subunit contains an active site, located in the central part of the hydrophobic core of the monomer, which functions independently.

It is found in the endosome. The enzyme catalyses scytalone = 1,3,8-trihydroxynaphthalene + H2O. It participates in pigment biosynthesis; melanin biosynthesis. Its activity is regulated as follows. Fenoxanil inhibits arp1 scytalone dehydratase activity. Scytalone dehydratase; part of the gene cluster that mediates the biosynthesis of dihydroxynaphthalene (DHN)-melanin, a bluish-green pigment and a structural component of the conidial wall. The first step of the pathway is the production of the heptaketide naphtopyrone YWA1 by the polyketide synthase alb1 though condensation of acetyl-CoA with malonyl-CoA. The naphtopyrone YWA1 is then converted to the pentaketide 1,3,6,8-tetrahydroxynaphthalene (1,3,6,8-THN) by the heptaketide hydrolyase ayg1 though chain-length shortening. 1,3,6,8-THN is substrate of the hydroxynaphthalene reductase arp2 to yield scytalone. The scytalone dehydratase arp1 then reduces scytalone to 1,3,8-THN. 1,3,8-THN is also substrate of the hydroxynaphthalene reductase arp2 to yield vermelone. Vermelone is further converted by the multicopper oxidase abr1 to 1,8-DHN. Finally the laccase abr2 transforms 1,8-DHN to DHN-melanin. DHN-melanin biosynthesis appears to be initiated in endosomes where early enzymes (abl1, ayg1, arp1 and arp2) localize, with exocytosis leading to melanin deposition on the cell surface where late enzymes (abr1 and abr2) localize. DHN-melanin is an important structural component of the outer cell wall and is required for the presence of conidial surface hydrophobins. DHN-melanin also plays a crucial role in fungal virulence, including a protective role against the host's immune defenses. DHN-melanin also protects conidia against amoeba predation. This is Scytalone dehydratase arp1 from Aspergillus fumigatus (strain ATCC MYA-4609 / CBS 101355 / FGSC A1100 / Af293) (Neosartorya fumigata).